Here is a 304-residue protein sequence, read N- to C-terminus: Non-specific ribonucleoside hydrolase RihC (304 aa).

Residue H233 is part of the active site.

The protein belongs to the IUNH family. RihC subfamily.

Hydrolyzes both purine and pyrimidine ribonucleosides with a broad-substrate specificity. In Escherichia coli O8 (strain IAI1), this protein is Non-specific ribonucleoside hydrolase RihC.